The chain runs to 67 residues: Sec-independent protein translocase protein TatA (67 aa).

The chain crosses the membrane as a helical span at residues 1 to 21 (MGSFSLTHWIIVLIIVVLIFG). The tract at residues 43 to 67 (LNEGTDGKEAQKDDVIEHKKDEDKA) is disordered. Residues 47–67 (TDGKEAQKDDVIEHKKDEDKA) are compositionally biased toward basic and acidic residues.

The protein belongs to the TatA/E family. In terms of assembly, the Tat system comprises two distinct complexes: a TatABC complex, containing multiple copies of TatA, TatB and TatC subunits, and a separate TatA complex, containing only TatA subunits. Substrates initially bind to the TatABC complex, which probably triggers association of the separate TatA complex to form the active translocon.

It is found in the cell inner membrane. Part of the twin-arginine translocation (Tat) system that transports large folded proteins containing a characteristic twin-arginine motif in their signal peptide across membranes. TatA could form the protein-conducting channel of the Tat system. The chain is Sec-independent protein translocase protein TatA from Neisseria gonorrhoeae (strain ATCC 700825 / FA 1090).